Here is a 114-residue protein sequence, read N- to C-terminus: U-myrmeciitoxin(01)-Mg8a (114 aa).

The signal sequence occupies residues 1–20 (MKLSTLLVAFVLLVITVILS). Positions 21-44 (TPSTNAKALAESNALAVAVSEAEP) are excised as a propeptide.

This sequence belongs to the formicidae venom precursor-01 superfamily. In terms of tissue distribution, expressed by the venom gland.

The protein localises to the secreted. Functionally, may have antimicrobial properties, like most ant linear peptides. This chain is U-myrmeciitoxin(01)-Mg8a, found in Myrmecia gulosa (Red bulldog ant).